We begin with the raw amino-acid sequence, 474 residues long: tRNA-2-methylthio-N(6)-dimethylallyladenosine synthase (474 aa).

Residues 3–120 (KKLHIKTWGC…LPEMINSVRG (118 aa)) form the MTTase N-terminal domain. Positions 12, 49, 83, 157, 161, and 164 each coordinate [4Fe-4S] cluster. Residues 143–378 (RADGPSAFVS…INQQVTAWSR (236 aa)) form the Radical SAM core domain. In terms of domain architecture, TRAM spans 378–441 (RRMLGTTQRI…TNSMRGKVVR (64 aa)).

It belongs to the methylthiotransferase family. MiaB subfamily. In terms of assembly, monomer. [4Fe-4S] cluster serves as cofactor.

It localises to the cytoplasm. The enzyme catalyses N(6)-dimethylallyladenosine(37) in tRNA + (sulfur carrier)-SH + AH2 + 2 S-adenosyl-L-methionine = 2-methylsulfanyl-N(6)-dimethylallyladenosine(37) in tRNA + (sulfur carrier)-H + 5'-deoxyadenosine + L-methionine + A + S-adenosyl-L-homocysteine + 2 H(+). Its function is as follows. Catalyzes the methylthiolation of N6-(dimethylallyl)adenosine (i(6)A), leading to the formation of 2-methylthio-N6-(dimethylallyl)adenosine (ms(2)i(6)A) at position 37 in tRNAs that read codons beginning with uridine. The sequence is that of tRNA-2-methylthio-N(6)-dimethylallyladenosine synthase from Enterobacter sp. (strain 638).